The sequence spans 233 residues: Gamma-glutamyl-hercynylcysteine sulfoxide hydrolase (233 aa).

C2 acts as the Nucleophile in catalysis. The region spanning 2-233 (CRHLGWLGAQ…TALDRAKGPR (232 aa)) is the Glutamine amidotransferase type-2 domain.

The catalysed reaction is gamma-L-glutamyl-hercynylcysteine S-oxide + H2O = S-(hercyn-2-yl)-L-cysteine S-oxide + L-glutamate. The protein operates within amino-acid biosynthesis; ergothioneine biosynthesis. Catalyzes the hydrolysis of the gamma-glutamyl amide bond of hercynyl-gamma-L-glutamyl-L-cysteine sulfoxide to produce hercynylcysteine sulfoxide, a step in the biosynthesis pathway of ergothioneine. ERG is one of the major redox buffers which protects bacteria against redox stressors and antibiotics; loss of ERG or mycothiol (MSH, the other major redox buffer in this bacteria) leads to respiratory alterations and bioenergetic deficiencies that negatively impact virulence. The polypeptide is Gamma-glutamyl-hercynylcysteine sulfoxide hydrolase (Mycobacterium tuberculosis (strain CDC 1551 / Oshkosh)).